The chain runs to 365 residues: Holliday junction branch migration complex subunit RuvB (365 aa).

Residues 1 to 191 are large ATPase domain (RuvB-L); that stretch reads MNFDPIDDFD…FGFTAHMDFY (191 aa). Residues L30, R31, G72, K75, T76, S77, 138–140, R181, Y191, and R228 contribute to the ATP site; that span reads EDF. T76 contributes to the Mg(2+) binding site. The segment at 192–262 is small ATPAse domain (RuvB-S); the sequence is EPEELQQILM…VAQAALAVYD (71 aa). Residues 265-365 are head domain (RuvB-H); that stretch reads QLGLDRLDRS…QATLFDPNGE (101 aa). 2 residues coordinate DNA: R320 and R325.

The protein belongs to the RuvB family. Homohexamer. Forms an RuvA(8)-RuvB(12)-Holliday junction (HJ) complex. HJ DNA is sandwiched between 2 RuvA tetramers; dsDNA enters through RuvA and exits via RuvB. An RuvB hexamer assembles on each DNA strand where it exits the tetramer. Each RuvB hexamer is contacted by two RuvA subunits (via domain III) on 2 adjacent RuvB subunits; this complex drives branch migration. In the full resolvosome a probable DNA-RuvA(4)-RuvB(12)-RuvC(2) complex forms which resolves the HJ.

Its subcellular location is the cytoplasm. The enzyme catalyses ATP + H2O = ADP + phosphate + H(+). Functionally, the RuvA-RuvB-RuvC complex processes Holliday junction (HJ) DNA during genetic recombination and DNA repair, while the RuvA-RuvB complex plays an important role in the rescue of blocked DNA replication forks via replication fork reversal (RFR). RuvA specifically binds to HJ cruciform DNA, conferring on it an open structure. The RuvB hexamer acts as an ATP-dependent pump, pulling dsDNA into and through the RuvAB complex. RuvB forms 2 homohexamers on either side of HJ DNA bound by 1 or 2 RuvA tetramers; 4 subunits per hexamer contact DNA at a time. Coordinated motions by a converter formed by DNA-disengaged RuvB subunits stimulates ATP hydrolysis and nucleotide exchange. Immobilization of the converter enables RuvB to convert the ATP-contained energy into a lever motion, pulling 2 nucleotides of DNA out of the RuvA tetramer per ATP hydrolyzed, thus driving DNA branch migration. The RuvB motors rotate together with the DNA substrate, which together with the progressing nucleotide cycle form the mechanistic basis for DNA recombination by continuous HJ branch migration. Branch migration allows RuvC to scan DNA until it finds its consensus sequence, where it cleaves and resolves cruciform DNA. The protein is Holliday junction branch migration complex subunit RuvB of Rhodococcus erythropolis (strain PR4 / NBRC 100887).